A 173-amino-acid chain; its full sequence is MNDADTNLGSSFSDDTHSVFEFPELDLSDEWMDDDLVSAVSGMNQSYGYQTSDVAGALFSGSSSCFSHPESPSTKTYVAATATASADNQNKKEKKKIKGRVAFKTRSEVEVLDDGFKWRKYGKKMVKNSPHPRNYYKCSVDGCPVKKRVERDRDDPSFVITTYEGSHNHSSMN.

A DNA-binding region (WRKY) is located at residues 107-172 (SEVEVLDDGF…YEGSHNHSSM (66 aa)).

Belongs to the WRKY group II-c family.

The protein resides in the nucleus. Transcription factor. Interacts specifically with the W box (5'-(T)TGAC[CT]-3'), a frequently occurring elicitor-responsive cis-acting element. In Arabidopsis thaliana (Mouse-ear cress), this protein is Probable WRKY transcription factor 50 (WRKY50).